A 273-amino-acid polypeptide reads, in one-letter code: F420-dependent methylenetetrahydromethanopterin dehydrogenase (273 aa).

Belongs to the MTD family.

The enzyme catalyses 5,10-methylenetetrahydromethanopterin + oxidized coenzyme F420-(gamma-L-Glu)(n) + 2 H(+) = 5,10-methenyl-5,6,7,8-tetrahydromethanopterin + reduced coenzyme F420-(gamma-L-Glu)(n). The protein operates within metabolic intermediate metabolism; lactate oxidation. Functionally, catalyzes the oxidation of methylene-H(4)MPT to methenyl-H(4)MPT(+). This Archaeoglobus fulgidus (strain ATCC 49558 / DSM 4304 / JCM 9628 / NBRC 100126 / VC-16) protein is F420-dependent methylenetetrahydromethanopterin dehydrogenase (mtd).